The sequence spans 479 residues: Glycogen synthase (479 aa).

Residue K15 coordinates ADP-alpha-D-glucose.

Belongs to the glycosyltransferase 1 family. Bacterial/plant glycogen synthase subfamily.

The catalysed reaction is [(1-&gt;4)-alpha-D-glucosyl](n) + ADP-alpha-D-glucose = [(1-&gt;4)-alpha-D-glucosyl](n+1) + ADP + H(+). Its pathway is glycan biosynthesis; glycogen biosynthesis. Its function is as follows. Synthesizes alpha-1,4-glucan chains using ADP-glucose. The sequence is that of Glycogen synthase from Nostoc punctiforme (strain ATCC 29133 / PCC 73102).